The chain runs to 211 residues: Degradation in the endoplasmic reticulum protein 1 (211 aa).

Met-1 is modified (N-acetylmethionine). At 1–14 (MDAVILNLLGDIPL) the chain is on the cytoplasmic side. The helical transmembrane segment at 15 to 32 (VTRLWTIGCLVLSGLTSL) threads the bilayer. Topologically, residues 33 to 67 (RIVDPGKVVYSYDLVFKKGQYGRLLYSIFDYGAFN) are lumenal. Residues 68–85 (WISMINIFVSANHLSTLE) form a helical membrane-spanning segment. The Cytoplasmic portion of the chain corresponds to 86-92 (NSFNLRR). The chain crosses the membrane as a helical span at residues 93 to 109 (KFCWIIFLLLVILVKMT). The Lumenal portion of the chain corresponds to 110-117 (SIEQPAAS). Residues 118–133 (LGVLLHENLVYYELKK) form a helical membrane-spanning segment. Over 134–149 (NGNQMNVRFFGAIDVS) the chain is Cytoplasmic. A helical transmembrane segment spans residues 150-165 (PSIFPIYMNAVMYFVY). Residues 166 to 168 (KRS) are Lumenal-facing. Residues 169–189 (WLEIAMNFMPGHVIYYMDDII) traverse the membrane as a helical segment. Topologically, residues 190–211 (GKIYGIDLCKSPYDWFRNTETP) are cytoplasmic.

This sequence belongs to the derlin family. As to quaternary structure, component of the HRD1 ubiquitin ligase complex which contains the E3 ligase HRD1, its cofactors HRD3, USA1 and DER1, substrate recruiting factor YOS9 and CDC48-binding protein UBX2. Within the complex, interacts with USA1 (via C-terminus). In ERAD-L, HRD3 and YOS9 jointly bind misfolded glycoproteins in the endoplasmic reticulum (ER) lumen. Movement of ERAD-L substrates through the ER membrane is facilitated by HRD1 and DER1 which have lateral gates facing each other and which distort the membrane region between the lateral gates, making it much thinner than a normal phospholipid bilayer. Substrates insert into the membrane as a hairpin loop with one strand interacting with DER1 and the other with HRD1. The HRD1 complex interacts with the heterotrimeric CDC48-NPL4-UFD1 ATPase complex which is recruited by UBX2 via its interaction with CDC48 and which moves ubiquitinated substrates to the cytosol for targeting to the proteasome. In terms of processing, N-terminally acetylated by acetyltransferase NatB which enhances DER1 stability and is required for ERAD-L function.

The protein resides in the endoplasmic reticulum membrane. Component of the endoplasmic reticulum-associated degradation (ERAD) pathway. Specifically required for the ERAD-L pathway which mediates the degradation of proteins with misfolded lumenal domains within the endoplasmic reticulum (ER). Facilitates retrotranslocation of misfolded proteins from the ER lumen through the ER membrane in conjunction with HRD1. Both proteins have lateral gates facing each other and distort the membrane region between the lateral gates, making it much thinner than a normal phospholipid bilayer. Substrates insert into the membrane as a hairpin loop with one strand interacting with DER1 and the other with HRD1. This Saccharomyces cerevisiae (strain ATCC 204508 / S288c) (Baker's yeast) protein is Degradation in the endoplasmic reticulum protein 1 (DER1).